Reading from the N-terminus, the 299-residue chain is Porphobilinogen deaminase (299 aa).

Position 234 is an S-(dipyrrolylmethanemethyl)cysteine (Cys234).

It belongs to the HMBS family. Monomer. Requires dipyrromethane as cofactor.

It carries out the reaction 4 porphobilinogen + H2O = hydroxymethylbilane + 4 NH4(+). It functions in the pathway porphyrin-containing compound metabolism; protoporphyrin-IX biosynthesis; coproporphyrinogen-III from 5-aminolevulinate: step 2/4. Its function is as follows. Tetrapolymerization of the monopyrrole PBG into the hydroxymethylbilane pre-uroporphyrinogen in several discrete steps. This Corynebacterium efficiens (strain DSM 44549 / YS-314 / AJ 12310 / JCM 11189 / NBRC 100395) protein is Porphobilinogen deaminase.